The following is a 321-amino-acid chain: Lipoyl synthase (321 aa).

The [4Fe-4S] cluster site is built by Cys-68, Cys-73, Cys-79, Cys-94, Cys-98, Cys-101, and Ser-308. The 218-residue stretch at 80 to 297 (FNHGTATFMI…KQEALAMGFT (218 aa)) folds into the Radical SAM core domain.

It belongs to the radical SAM superfamily. Lipoyl synthase family. [4Fe-4S] cluster is required as a cofactor.

The protein localises to the cytoplasm. It catalyses the reaction [[Fe-S] cluster scaffold protein carrying a second [4Fe-4S](2+) cluster] + N(6)-octanoyl-L-lysyl-[protein] + 2 oxidized [2Fe-2S]-[ferredoxin] + 2 S-adenosyl-L-methionine + 4 H(+) = [[Fe-S] cluster scaffold protein] + N(6)-[(R)-dihydrolipoyl]-L-lysyl-[protein] + 4 Fe(3+) + 2 hydrogen sulfide + 2 5'-deoxyadenosine + 2 L-methionine + 2 reduced [2Fe-2S]-[ferredoxin]. It participates in protein modification; protein lipoylation via endogenous pathway; protein N(6)-(lipoyl)lysine from octanoyl-[acyl-carrier-protein]: step 2/2. Its function is as follows. Catalyzes the radical-mediated insertion of two sulfur atoms into the C-6 and C-8 positions of the octanoyl moiety bound to the lipoyl domains of lipoate-dependent enzymes, thereby converting the octanoylated domains into lipoylated derivatives. In Sodalis glossinidius (strain morsitans), this protein is Lipoyl synthase.